Consider the following 217-residue polypeptide: 7-cyano-7-deazaguanine synthase (217 aa).

F10–L20 is an ATP binding site. Zn(2+)-binding residues include C185, C194, C197, and C200.

This sequence belongs to the QueC family. As to quaternary structure, homodimer. Zn(2+) is required as a cofactor.

The catalysed reaction is 7-carboxy-7-deazaguanine + NH4(+) + ATP = 7-cyano-7-deazaguanine + ADP + phosphate + H2O + H(+). Its pathway is purine metabolism; 7-cyano-7-deazaguanine biosynthesis. In terms of biological role, catalyzes the ATP-dependent conversion of 7-carboxy-7-deazaguanine (CDG) to 7-cyano-7-deazaguanine (preQ(0)). This is 7-cyano-7-deazaguanine synthase from Streptococcus mutans serotype c (strain ATCC 700610 / UA159).